The chain runs to 183 residues: uncharacterized protein (183 aa).

Residues L7–P23 form a helical membrane-spanning segment.

It localises to the membrane. This is an uncharacterized protein from Haemophilus influenzae (strain ATCC 51907 / DSM 11121 / KW20 / Rd).